Here is a 1142-residue protein sequence, read N- to C-terminus: Error-prone DNA polymerase (1142 aa).

A disordered region spans residues 291–361; that stretch reads TSSPAQAARE…GTGAAAGTDR (71 aa). Composition is skewed to low complexity over residues 311–320 and 327–344; these read LRASLPAERP and GPAA…PGEP. Residues 345–355 show a composition bias toward gly residues; sequence GLAGAGGGTGA.

It belongs to the DNA polymerase type-C family. DnaE2 subfamily.

Its subcellular location is the cytoplasm. It carries out the reaction DNA(n) + a 2'-deoxyribonucleoside 5'-triphosphate = DNA(n+1) + diphosphate. Its function is as follows. DNA polymerase involved in damage-induced mutagenesis and translesion synthesis (TLS). It is not the major replicative DNA polymerase. This chain is Error-prone DNA polymerase, found in Anaeromyxobacter dehalogenans (strain 2CP-1 / ATCC BAA-258).